A 396-amino-acid polypeptide reads, in one-letter code: S-adenosylmethionine synthase (396 aa).

His16 contributes to the ATP binding site. Asp18 contacts Mg(2+). Glu44 contributes to the K(+) binding site. Positions 57 and 100 each coordinate L-methionine. The segment at 100–110 is flexible loop; that stretch reads QSVDIAQGVDR. ATP is bound by residues 165–167, Asp240, 246–247, Ala263, and Lys267; these read DAK and RK. Asp240 serves as a coordination point for L-methionine. L-methionine is bound at residue Lys271.

The protein belongs to the AdoMet synthase family. As to quaternary structure, homotetramer; dimer of dimers. Mg(2+) is required as a cofactor. The cofactor is K(+).

Its subcellular location is the cytoplasm. It catalyses the reaction L-methionine + ATP + H2O = S-adenosyl-L-methionine + phosphate + diphosphate. It functions in the pathway amino-acid biosynthesis; S-adenosyl-L-methionine biosynthesis; S-adenosyl-L-methionine from L-methionine: step 1/1. Functionally, catalyzes the formation of S-adenosylmethionine (AdoMet) from methionine and ATP. The overall synthetic reaction is composed of two sequential steps, AdoMet formation and the subsequent tripolyphosphate hydrolysis which occurs prior to release of AdoMet from the enzyme. The protein is S-adenosylmethionine synthase of Pseudomonas putida (strain W619).